The chain runs to 103 residues: Pyrimidine/purine nucleoside phosphorylase (103 aa).

The protein belongs to the nucleoside phosphorylase PpnP family.

It carries out the reaction a purine D-ribonucleoside + phosphate = a purine nucleobase + alpha-D-ribose 1-phosphate. It catalyses the reaction adenosine + phosphate = alpha-D-ribose 1-phosphate + adenine. The catalysed reaction is cytidine + phosphate = cytosine + alpha-D-ribose 1-phosphate. The enzyme catalyses guanosine + phosphate = alpha-D-ribose 1-phosphate + guanine. It carries out the reaction inosine + phosphate = alpha-D-ribose 1-phosphate + hypoxanthine. It catalyses the reaction thymidine + phosphate = 2-deoxy-alpha-D-ribose 1-phosphate + thymine. The catalysed reaction is uridine + phosphate = alpha-D-ribose 1-phosphate + uracil. The enzyme catalyses xanthosine + phosphate = alpha-D-ribose 1-phosphate + xanthine. In terms of biological role, catalyzes the phosphorolysis of diverse nucleosides, yielding D-ribose 1-phosphate and the respective free bases. Can use uridine, adenosine, guanosine, cytidine, thymidine, inosine and xanthosine as substrates. Also catalyzes the reverse reactions. This Methylobacillus flagellatus (strain ATCC 51484 / DSM 6875 / VKM B-1610 / KT) protein is Pyrimidine/purine nucleoside phosphorylase.